A 114-amino-acid chain; its full sequence is TYRO protein tyrosine kinase-binding protein (114 aa).

Positions 1-21 (MGALEPSWCLLFLPVLLTVGG) are cleaved as a signal peptide. Topologically, residues 22–42 (LSPVQAQSDTFPRCDCSSVSP) are extracellular. The helical transmembrane segment at 43–63 (GVLAGIVLGDLVLTLLIALAV) threads the bilayer. Ca(2+) is bound at residue Asp-52. Residues 64–114 (YSLGRLVSRGQGTAEGTRKQHIAETESPYQELQGQRPEVYSDLNTQRQYYR) lie on the Cytoplasmic side of the membrane. Positions 74-107 (QGTAEGTRKQHIAETESPYQELQGQRPEVYSDLN) are disordered. An ITAM domain is found at 81-109 (RKQHIAETESPYQELQGQRPEVYSDLNTQ). Residues Tyr-92 and Tyr-103 each carry the phosphotyrosine modification.

It belongs to the TYROBP family. In terms of assembly, homodimer; disulfide-linked. Homotrimer; disulfide-linked. Homotetramer; disulfide-linked. Homotrimers and homotetramers form when low levels of partner receptors are available and are competitive with assembly with interacting receptors. They may represent alternative oligomerization states or may be intermediates in the receptor assembly process. Binding of a metal cation aids in homooligomerization through coordination of the metal ion by the subunits of the oligomer. Interacts with TREM1. Interacts with TREM2. Interacts with TREM3. Interacts with CLECSF5. Interacts with CD300LB and CD300C2. Interacts with CD300E. Interacts (via ITAM domain) with SYK (via SH2 domains); activates SYK mediating neutrophil and macrophage integrin-mediated activation. Interacts (via transmembrane domain) with KLRK1 isoform 2 (via transmembrane domain); the interaction is required for KLRK1 NK cell surface expression and NK cell-mediated cytotoxicity. Interacts with KLRC2. Interacts with CD300H. Interacts with KLRD1. Interacts with KLRA4 and KLRA8. In terms of processing, tyrosine phosphorylated. Following ligand binding by associated receptors, tyrosine phosphorylated in the ITAM domain which leads to activation of additional tyrosine kinases and subsequent cell activation. In terms of tissue distribution, expressed on microglia (at protein level). Expressed on oligodendrocytes (at protein level). Expressed on macrophages and osteoclasts. Expressed on dendritic cells in liver, spleen, kidney and lung with highest levels in liver dendritic cells.

It localises to the cell membrane. In terms of biological role, adapter protein which non-covalently associates with activating receptors found on the surface of a variety of immune cells to mediate signaling and cell activation following ligand binding by the receptors. TYROBP is tyrosine-phosphorylated in the ITAM domain following ligand binding by the associated receptors which leads to activation of additional tyrosine kinases and subsequent cell activation. Also has an inhibitory role in some cells. Non-covalently associates with activating receptors of the CD300 family to mediate cell activation. Also mediates cell activation through association with activating receptors of the CD200R family. Required for neutrophil activation mediated by integrin. Required for the activation of myeloid cells mediated by the CLEC5A/MDL1 receptor. Associates with natural killer (NK) cell receptors such as the KLRD1/KLRC2 heterodimer to mediate NK cell activation. Also associates non-covalently with the NK cell receptors KLRA4/LY49D and KLRA8/LY49H which leads to NK cell activation. Associates with TREM1 to mediate activation of neutrophils and monocytes. Associates with TREM2 on monocyte-derived dendritic cells to mediate up-regulation of chemokine receptor CCR7 and dendritic cell maturation and survival. Association with TREM2 mediates cytokine-induced formation of multinucleated giant cells which are formed by the fusion of macrophages. Stabilizes the TREM2 C-terminal fragment (TREM2-CTF) which is produced by TREM2 ectodomain shedding. In microglia, required with TREM2 for phagocytosis of apoptotic neurons. Required with ITGAM/CD11B in microglia to control production of microglial superoxide ions which promote the neuronal apoptosis that occurs during brain development. Promotes pro-inflammatory responses in microglia following nerve injury which accelerates degeneration of injured neurons. Positively regulates the expression of the IRAK3/IRAK-M kinase and IL10 production by liver dendritic cells and inhibits their T cell allostimulatory ability. Negatively regulates B cell proliferation. Required for CSF1-mediated osteoclast cytoskeletal organization. Positively regulates multinucleation during osteoclast development. The chain is TYRO protein tyrosine kinase-binding protein from Mus musculus (Mouse).